We begin with the raw amino-acid sequence, 610 residues long: Elongation factor 4 (610 aa).

The tr-type G domain occupies 11–193 (EKIRNFSIIA…QIVEKVPAPT (183 aa)). GTP-binding positions include 23–28 (DHGKST) and 140–143 (NKID).

It belongs to the TRAFAC class translation factor GTPase superfamily. Classic translation factor GTPase family. LepA subfamily.

Its subcellular location is the cell membrane. The enzyme catalyses GTP + H2O = GDP + phosphate + H(+). Its function is as follows. Required for accurate and efficient protein synthesis under certain stress conditions. May act as a fidelity factor of the translation reaction, by catalyzing a one-codon backward translocation of tRNAs on improperly translocated ribosomes. Back-translocation proceeds from a post-translocation (POST) complex to a pre-translocation (PRE) complex, thus giving elongation factor G a second chance to translocate the tRNAs correctly. Binds to ribosomes in a GTP-dependent manner. This Streptococcus pyogenes serotype M2 (strain MGAS10270) protein is Elongation factor 4.